Reading from the N-terminus, the 123-residue chain is Large ribosomal subunit protein bL12 (123 aa).

The protein belongs to the bacterial ribosomal protein bL12 family. As to quaternary structure, homodimer. Part of the ribosomal stalk of the 50S ribosomal subunit. Forms a multimeric L10(L12)X complex, where L10 forms an elongated spine to which 2 to 4 L12 dimers bind in a sequential fashion. Binds GTP-bound translation factors.

Functionally, forms part of the ribosomal stalk which helps the ribosome interact with GTP-bound translation factors. Is thus essential for accurate translation. The chain is Large ribosomal subunit protein bL12 from Clostridium acetobutylicum (strain ATCC 824 / DSM 792 / JCM 1419 / IAM 19013 / LMG 5710 / NBRC 13948 / NRRL B-527 / VKM B-1787 / 2291 / W).